The following is a 361-amino-acid chain: Zinc transporter ZIP13 (361 aa).

The Lumenal portion of the chain corresponds to 1-6; that stretch reads MPGCPC. A helical membrane pass occupies residues 7–27; the sequence is PGCGMAGQRLLFLTVLALELL. Residues 28–68 are Cytoplasmic-facing; that stretch reads ERAGGSQPALRSLGAAAACRLDSKESESWGALLSGERLDTW. A helical membrane pass occupies residues 69 to 89; sequence ICSLLGSLMVGLSGVFPLLVI. At 90–108 the chain is on the lumenal side; that stretch reads PLEMGTMLQSEAGAWRLKQ. A helical transmembrane segment spans residues 109–129; it reads LLSFALGGLLGNVFLHLLPEA. Topologically, residues 130–150 are cytoplasmic; sequence WAYTCNISPGVEGQSLQRQQQ. A helical membrane pass occupies residues 151–171; sequence LGLWVIAGFLTFLALEKMFLN. The Lumenal segment spans residues 172–233; it reads CKEEDPSQAP…TIDNFTHGLA (62 aa). The chain crosses the membrane as a helical span at residues 234–254; sequence VAASFLVSKKIGLLTTMAILL. Positions 255–260 match the XEXPHE-motif motif; it reads HEIPHE. Over 255-276 the chain is Cytoplasmic; that stretch reads HEIPHEVGDFAILLRAGFDRWT. Residues 277–297 form a helical membrane-spanning segment; the sequence is AAKLQFSTALGGLLGACFAIC. Residues 298–307 lie on the Lumenal side of the membrane; the sequence is TQSPKGVEET. The chain crosses the membrane as a helical span at residues 308 to 328; that stretch reads VVWTLPFTSGGFLYVALVNVL. The Cytoplasmic segment spans residues 329-340; sequence PDLLEEDDPWHL. Residues 341 to 361 form a helical membrane-spanning segment; sequence NPPLPTGTPCSRCCCSAPVSW.

The protein belongs to the ZIP transporter (TC 2.A.5) family. As to quaternary structure, homodimer.

It localises to the golgi apparatus membrane. The protein localises to the cytoplasmic vesicle membrane. It is found in the endoplasmic reticulum membrane. The enzyme catalyses Zn(2+)(in) = Zn(2+)(out). Its function is as follows. Functions as a zinc transporter transporting Zn(2+) from the Golgi apparatus to the cytosol and thus influences the zinc level at least in areas of the cytosol. May regulate beige adipocyte differentiation. This is Zinc transporter ZIP13 from Rattus norvegicus (Rat).